The following is a 61-amino-acid chain: Probradykinin-2 (61 aa).

The N-terminal stretch at 1–22 is a signal peptide; sequence MSFLKKSLFLVLFLGLVSFSIC. Residues 23–50 constitute a propeptide that is removed on maturation; that stretch reads EEEKRETEEEENEDEIEEQSEEKKRFEP. The interval 24–61 is disordered; sequence EEKRETEEEENEDEIEEQSEEKKRFEPVPPGFTPFRQT. Residues 30–42 show a composition bias toward acidic residues; it reads EEEENEDEIEEQS. P52 carries the post-translational modification 4-hydroxyproline.

This sequence belongs to the frog skin active peptide (FSAP) family. Bradykinin-related peptide subfamily. As to expression, expressed by the skin glands.

It localises to the secreted. Its function is as follows. May produce in vitro relaxation of rat arterial smooth muscle and constriction of intestinal smooth muscle. May target bradykinin receptors (BDKRB). The chain is Probradykinin-2 from Pithecopus azureus (Orange-legged monkey tree frog).